A 263-amino-acid chain; its full sequence is Cell division protein DivIB (263 aa).

At 1-32 (MNPGQDREKIVNIEERIPKIKEQRKQKANRRL) the chain is on the cytoplasmic side. A helical transmembrane segment spans residues 33–53 (ISFIMLFFIMVLIIVYLQTPI). Positions 51–123 (TPISKVSTIS…NKINIAIEEY (73 aa)) are alpha. The 70-residue stretch at 54–123 (SKVSTISVTG…NKINIAIEEY (70 aa)) folds into the POTRA domain. Over 54–263 (SKVSTISVTG…DKAAKKEDEN (210 aa)) the chain is Extracellular. The tract at residues 124–251 (KAIAYLEKDD…EVATYFEEFG (128 aa)) is beta. The interval 229 to 263 (SQLSSNKKGIIHLEVATYFEEFGKNDKAAKKEDEN) is gamma.

Belongs to the FtsQ/DivIB family. DivIB subfamily. In terms of assembly, interacts with FtsL, DivIC and PBP-2B.

It is found in the cell membrane. Functionally, cell division protein that may be involved in stabilizing or promoting the assembly of the division complex. Plays an essential role in division at high temperatures, maybe by protecting FtsL from degradation or by promoting formation of the FtsL-DivIC complex. May modulate the transpeptidase activity of PBP-2B. Also required for efficient sporulation at all temperatures. Could be directly involved in the engulfment process or be required to form a sporulation septum competent for engulfment. Influences the Spo0J/Soj system of chromosome segregation. The polypeptide is Cell division protein DivIB (Bacillus subtilis (strain 168)).